The chain runs to 424 residues: Serine--tRNA ligase (424 aa).

231–233 lines the L-serine pocket; it reads TAE. Residue 262-264 participates in ATP binding; the sequence is RSE. Glu285 serves as a coordination point for L-serine. 349-352 is an ATP binding site; the sequence is EISS. Ser385 provides a ligand contact to L-serine.

It belongs to the class-II aminoacyl-tRNA synthetase family. Type-1 seryl-tRNA synthetase subfamily. In terms of assembly, homodimer. The tRNA molecule binds across the dimer.

It is found in the cytoplasm. It catalyses the reaction tRNA(Ser) + L-serine + ATP = L-seryl-tRNA(Ser) + AMP + diphosphate + H(+). The enzyme catalyses tRNA(Sec) + L-serine + ATP = L-seryl-tRNA(Sec) + AMP + diphosphate + H(+). Its pathway is aminoacyl-tRNA biosynthesis; selenocysteinyl-tRNA(Sec) biosynthesis; L-seryl-tRNA(Sec) from L-serine and tRNA(Sec): step 1/1. In terms of biological role, catalyzes the attachment of serine to tRNA(Ser). Is also able to aminoacylate tRNA(Sec) with serine, to form the misacylated tRNA L-seryl-tRNA(Sec), which will be further converted into selenocysteinyl-tRNA(Sec). This is Serine--tRNA ligase from Bacillus anthracis (strain A0248).